Here is a 242-residue protein sequence, read N- to C-terminus: Aspartate/glutamate leucyltransferase (242 aa).

It belongs to the R-transferase family. Bpt subfamily.

It is found in the cytoplasm. The catalysed reaction is N-terminal L-glutamyl-[protein] + L-leucyl-tRNA(Leu) = N-terminal L-leucyl-L-glutamyl-[protein] + tRNA(Leu) + H(+). It carries out the reaction N-terminal L-aspartyl-[protein] + L-leucyl-tRNA(Leu) = N-terminal L-leucyl-L-aspartyl-[protein] + tRNA(Leu) + H(+). In terms of biological role, functions in the N-end rule pathway of protein degradation where it conjugates Leu from its aminoacyl-tRNA to the N-termini of proteins containing an N-terminal aspartate or glutamate. This is Aspartate/glutamate leucyltransferase from Chromobacterium violaceum (strain ATCC 12472 / DSM 30191 / JCM 1249 / CCUG 213 / NBRC 12614 / NCIMB 9131 / NCTC 9757 / MK).